The primary structure comprises 535 residues: uncharacterized protein (535 aa).

Disordered stretches follow at residues 1 to 58 (MSMK…PRGP), 211 to 254 (EPPK…PPCI), 313 to 353 (RRVA…EQVK), 376 to 416 (RPDK…DQRL), 421 to 440 (QGLD…DAAW), and 508 to 535 (SLFE…SRRD). Basic and acidic residues predominate over residues 22–34 (IRRDPWFGGRDNE). The tract at residues 179–342 (AQYIRYTPSQ…KARQERSAMR (164 aa)) is SNW. Positions 376–393 (RPDKADKLRKERERDISE) are enriched in basic and acidic residues. The segment covering 511 to 535 (EHTKEKKRGGDGGDSRGESKRSRRD) has biased composition (basic and acidic residues).

It belongs to the SNW family.

This is an uncharacterized protein from Caenorhabditis elegans.